A 179-amino-acid chain; its full sequence is Large ribosomal subunit protein uL6 (179 aa).

The protein belongs to the universal ribosomal protein uL6 family. As to quaternary structure, part of the 50S ribosomal subunit.

In terms of biological role, this protein binds to the 23S rRNA, and is important in its secondary structure. It is located near the subunit interface in the base of the L7/L12 stalk, and near the tRNA binding site of the peptidyltransferase center. The protein is Large ribosomal subunit protein uL6 of Chlorobium limicola (strain DSM 245 / NBRC 103803 / 6330).